The chain runs to 505 residues: ADP-ribosylarginine hydrolase CG2909 (505 aa).

ADP-D-ribose is bound by residues Arg198, Gly336, Gly338, Gly340, Val341, Trp342, Trp377, Asp432, Asn439, Glu440, Gly450, and Asp451.

It catalyses the reaction N(omega)-(ADP-D-ribosyl)-L-arginyl-[protein] + H2O = ADP-D-ribose + L-arginyl-[protein]. It carries out the reaction N(omega)-(ADP-D-ribosyl)-L-arginine + H2O = ADP-D-ribose + L-arginine. Functionally, protein ADP-ribosyl hydrolase that specifically removes mono-ADP-ribosyl modifications from protein arginine residues. The polypeptide is ADP-ribosylarginine hydrolase CG2909 (Drosophila melanogaster (Fruit fly)).